Reading from the N-terminus, the 60-residue chain is Ribosome-inactivating protein dianthin-32 (60 aa).

This sequence belongs to the ribosome-inactivating protein family. Type 1 RIP subfamily.

It catalyses the reaction Endohydrolysis of the N-glycosidic bond at one specific adenosine on the 28S rRNA.. Single-chain ribosome-inactivating protein. The sequence is that of Ribosome-inactivating protein dianthin-32 from Dianthus caryophyllus (Carnation).